Reading from the N-terminus, the 111-residue chain is Small ribosomal subunit protein mS38 (111 aa).

Positions Arg82–Arg99 are enriched in basic residues. The segment at Arg82–Arg111 is disordered. The segment covering Glu100–Arg111 has biased composition (basic and acidic residues).

Belongs to the mitochondrion-specific ribosomal protein mS38 family. In terms of assembly, component of the mitochondrial small ribosomal subunit (mt-SSU). Mature yeast 74S mitochondrial ribosomes consist of a small (37S) and a large (54S) subunit. The 37S small subunit contains a 15S ribosomal RNA (15S mt-rRNA) and 34 different proteins. The 54S large subunit contains a 21S rRNA (21S mt-rRNA) and 46 different proteins.

It localises to the mitochondrion. The protein resides in the mitochondrion inner membrane. Component of the mitochondrial ribosome (mitoribosome), a dedicated translation machinery responsible for the synthesis of mitochondrial genome-encoded proteins, including at least some of the essential transmembrane subunits of the mitochondrial respiratory chain. The mitoribosomes are attached to the mitochondrial inner membrane and translation products are cotranslationally integrated into the membrane. mS38 is also involved in the splicing of the COX1 mRNA. The chain is Small ribosomal subunit protein mS38 (QRI5) from Saccharomyces cerevisiae (strain ATCC 204508 / S288c) (Baker's yeast).